The following is a 339-amino-acid chain: Exopolyphosphatase 1 (339 aa).

The segment at 315–339 (QTSVRDTRGQEVDRNAANRSRGDKT) is disordered. Over residues 319–339 (RDTRGQEVDRNAANRSRGDKT) the composition is skewed to basic and acidic residues.

This sequence belongs to the GppA/Ppx family. As to quaternary structure, homodimer.

The catalysed reaction is [phosphate](n) + H2O = [phosphate](n-1) + phosphate + H(+). Functionally, degradation of inorganic polyphosphates (polyP). Releases orthophosphate processively from the ends of the polyP chain. The protein is Exopolyphosphatase 1 of Mycobacterium leprae (strain TN).